Consider the following 309-residue polypeptide: Taste receptor type 2 member 20 (309 aa).

The Extracellular portion of the chain corresponds to Met-1 to His-6. Residues Ile-7–Ile-27 traverse the membrane as a helical segment. Residues Ala-28 to Gln-46 are Cytoplasmic-facing. Residues Ile-47–Tyr-67 form a helical membrane-spanning segment. At Ser-68–Lys-79 the chain is on the extracellular side. The chain crosses the membrane as a helical span at residues Val-80–Thr-100. The Cytoplasmic portion of the chain corresponds to Ser-101–Ala-125. The helical transmembrane segment at Lys-126 to Met-146 threads the bilayer. Topologically, residues Lys-147–Thr-178 are extracellular. Residues Val-179–Ile-199 form a helical membrane-spanning segment. The Cytoplasmic segment spans residues Tyr-200–Gln-229. The helical transmembrane segment at Thr-230–Trp-250 threads the bilayer. The Extracellular segment spans residues Asn-251–Ile-259. A helical transmembrane segment spans residues Val-260–Ile-280. The Cytoplasmic portion of the chain corresponds to Trp-281–Pro-309.

Belongs to the G-protein coupled receptor T2R family.

It localises to the membrane. Receptor that may play a role in the perception of bitterness and is gustducin-linked. May play a role in sensing the chemical composition of the gastrointestinal content. The activity of this receptor may stimulate alpha gustducin, mediate PLC-beta-2 activation and lead to the gating of TRPM5. In Pan paniscus (Pygmy chimpanzee), this protein is Taste receptor type 2 member 20 (TAS2R20).